A 125-amino-acid polypeptide reads, in one-letter code: MTNLLEKFNEQQIQRLAKEMPAFCPGDDLKVTFKVVDSTGERIQIFEGVCISKRNRGLHSSFSVRKVSHGESIVSQFFVYSPALISVQVMRKGKVRRAKLYYLCKLFGKAARIKERTTYVKKKSK.

The protein belongs to the bacterial ribosomal protein bL19 family.

In terms of biological role, this protein is located at the 30S-50S ribosomal subunit interface and may play a role in the structure and function of the aminoacyl-tRNA binding site. This chain is Large ribosomal subunit protein bL19, found in Wolbachia pipientis subsp. Culex pipiens (strain wPip).